Reading from the N-terminus, the 328-residue chain is Ferredoxin--NADP reductase 2 (328 aa).

7 residues coordinate FAD: Glu37, Gln45, Tyr50, Val90, Phe124, Asp285, and Thr325.

The protein belongs to the ferredoxin--NADP reductase type 2 family. In terms of assembly, homodimer. The cofactor is FAD.

It catalyses the reaction 2 reduced [2Fe-2S]-[ferredoxin] + NADP(+) + H(+) = 2 oxidized [2Fe-2S]-[ferredoxin] + NADPH. This is Ferredoxin--NADP reductase 2 from Latilactobacillus sakei subsp. sakei (strain 23K) (Lactobacillus sakei subsp. sakei).